The sequence spans 1081 residues: Importin-4 (1081 aa).

N-acetylmethionine is present on M1. One can recognise an Importin N-terminal domain in the interval 24-90 (ATEQLQIVLR…KSLILTALQR (67 aa)). 6 HEAT repeats span residues 348 to 385 (KLCPQLMPMLEEALRSESPYQRKAGLLVLAVLSDGAGD), 390 to 427 (RLLPPLLQIVCKGLEDPSQVVRNAALFALGQFSENLQP), 431 to 471 (SYSR…NLGP), 475 to 513 (PYLPELMECMLQLLRNPSSPRAKELAVSALGAIATAAQA), 895 to 932 (QFVSRLLPVLLSTAQEADPEVRSNAIFGMGVLAEHGGH), and 936 to 974 (EHFPKLLGLLFPLLARERHDRVRDNICGALARLLMASPT).

This sequence belongs to the importin beta family. As to quaternary structure, found in a cytosolic complex with ASF1 (ASF1A or ASF1B) and histones H3 and H4.

It localises to the cytoplasm. The protein resides in the nucleus. Its function is as follows. Nuclear transport receptor that mediates nuclear import of proteins, such as histones, RPS3A, TNP2 and VDR. Serves as receptor for nuclear localization signals (NLS) in cargo substrates. Is thought to mediate docking of the importin/substrate complex to the nuclear pore complex (NPC) through binding to nucleoporin and the complex is subsequently translocated through the pore by an energy requiring, Ran-dependent mechanism. At the nucleoplasmic side of the NPC, Ran binds to the importin, the importin/substrate complex dissociates and importin is re-exported from the nucleus to the cytoplasm where GTP hydrolysis releases Ran. The directionality of nuclear import is thought to be conferred by an asymmetric distribution of the GTP- and GDP-bound forms of Ran between the cytoplasm and nucleus. Mediates the nuclear import of the histone H3-H4 dimer when in complex with ASF1 (ASF1A or ASF1B). Mediates the ligand-independent nuclear import of vitamin D receptor (VDR). In vitro, mediates the nuclear import of human cytomegalovirus UL84 by recognizing a non-classical NLS. This chain is Importin-4 (IPO4), found in Homo sapiens (Human).